The chain runs to 525 residues: Probable CoA ligase CCL9 (525 aa).

Residues 171-179, 311-316, aspartate 395, 407-410, and lysine 501 each bind ATP; these read TSGTTSRPK, EAYAMT, and LVGR. The segment at 242-311 is SBD1; that stretch reads SASTFWSDMI…EESFGAPVLE (70 aa). The interval 312–375 is SBD2; that stretch reads AYAMTEAAHL…IRGPNVTKGY (64 aa).

It belongs to the ATP-dependent AMP-binding enzyme family.

The protein resides in the cytoplasm. It is found in the cytosol. This is Probable CoA ligase CCL9 from Humulus lupulus (European hop).